Reading from the N-terminus, the 134-residue chain is Profilin-2 (134 aa).

Cys13 and Cys118 are disulfide-bonded. The Involved in PIP2 interaction motif lies at 84-100; that stretch reads AVIRGKKGSGGITIKKT. Thr114 is modified (phosphothreonine).

This sequence belongs to the profilin family. In terms of assembly, occurs in many kinds of cells as a complex with monomeric actin in a 1:1 ratio. Post-translationally, phosphorylated by MAP kinases.

Its subcellular location is the cytoplasm. The protein localises to the cytoskeleton. In terms of biological role, binds to actin and affects the structure of the cytoskeleton. At high concentrations, profilin prevents the polymerization of actin, whereas it enhances it at low concentrations. This is Profilin-2 from Olea europaea (Common olive).